The primary structure comprises 75 residues: Small ribosomal subunit protein bS18 (75 aa).

It belongs to the bacterial ribosomal protein bS18 family. Part of the 30S ribosomal subunit. Forms a tight heterodimer with protein bS6.

In terms of biological role, binds as a heterodimer with protein bS6 to the central domain of the 16S rRNA, where it helps stabilize the platform of the 30S subunit. In Pectobacterium atrosepticum (strain SCRI 1043 / ATCC BAA-672) (Erwinia carotovora subsp. atroseptica), this protein is Small ribosomal subunit protein bS18.